The primary structure comprises 341 residues: Ribosomal RNA small subunit methyltransferase C (341 aa).

The protein belongs to the methyltransferase superfamily. RsmC family. Monomer.

Its subcellular location is the cytoplasm. It carries out the reaction guanosine(1207) in 16S rRNA + S-adenosyl-L-methionine = N(2)-methylguanosine(1207) in 16S rRNA + S-adenosyl-L-homocysteine + H(+). In terms of biological role, specifically methylates the guanine in position 1207 of 16S rRNA in the 30S particle. The sequence is that of Ribosomal RNA small subunit methyltransferase C from Pseudoalteromonas translucida (strain TAC 125).